We begin with the raw amino-acid sequence, 53 residues long: UPF0391 membrane protein YtjA (53 aa).

The next 2 membrane-spanning stretches (helical) occupy residues 4–24 (WGII…GGLA) and 30–48 (AAKI…SLFM).

Belongs to the UPF0391 family.

It is found in the cell membrane. The protein is UPF0391 membrane protein YtjA of Salmonella agona (strain SL483).